A 507-amino-acid polypeptide reads, in one-letter code: Bifunctional purine biosynthesis protein PurH (507 aa).

An MGS-like domain is found at 1 to 144 (MKRALLSVSD…KNSDSVWAVV (144 aa)).

It belongs to the PurH family.

The catalysed reaction is (6R)-10-formyltetrahydrofolate + 5-amino-1-(5-phospho-beta-D-ribosyl)imidazole-4-carboxamide = 5-formamido-1-(5-phospho-D-ribosyl)imidazole-4-carboxamide + (6S)-5,6,7,8-tetrahydrofolate. It carries out the reaction IMP + H2O = 5-formamido-1-(5-phospho-D-ribosyl)imidazole-4-carboxamide. It participates in purine metabolism; IMP biosynthesis via de novo pathway; 5-formamido-1-(5-phospho-D-ribosyl)imidazole-4-carboxamide from 5-amino-1-(5-phospho-D-ribosyl)imidazole-4-carboxamide (10-formyl THF route): step 1/1. Its pathway is purine metabolism; IMP biosynthesis via de novo pathway; IMP from 5-formamido-1-(5-phospho-D-ribosyl)imidazole-4-carboxamide: step 1/1. In Lacticaseibacillus paracasei (strain ATCC 334 / BCRC 17002 / CCUG 31169 / CIP 107868 / KCTC 3260 / NRRL B-441) (Lactobacillus paracasei), this protein is Bifunctional purine biosynthesis protein PurH.